The chain runs to 269 residues: Hydroxyethylthiazole kinase (269 aa).

M45 contributes to the substrate binding site. Positions 121 and 167 each coordinate ATP. G194 contributes to the substrate binding site.

This sequence belongs to the Thz kinase family. Requires Mg(2+) as cofactor.

The enzyme catalyses 5-(2-hydroxyethyl)-4-methylthiazole + ATP = 4-methyl-5-(2-phosphooxyethyl)-thiazole + ADP + H(+). It functions in the pathway cofactor biosynthesis; thiamine diphosphate biosynthesis; 4-methyl-5-(2-phosphoethyl)-thiazole from 5-(2-hydroxyethyl)-4-methylthiazole: step 1/1. Its function is as follows. Catalyzes the phosphorylation of the hydroxyl group of 4-methyl-5-beta-hydroxyethylthiazole (THZ). The chain is Hydroxyethylthiazole kinase from Bacillus licheniformis (strain ATCC 14580 / DSM 13 / JCM 2505 / CCUG 7422 / NBRC 12200 / NCIMB 9375 / NCTC 10341 / NRRL NRS-1264 / Gibson 46).